Here is a 234-residue protein sequence, read N- to C-terminus: UPF0173 metal-dependent hydrolase Smed_0942 (234 aa).

The protein belongs to the UPF0173 family.

The polypeptide is UPF0173 metal-dependent hydrolase Smed_0942 (Sinorhizobium medicae (strain WSM419) (Ensifer medicae)).